Reading from the N-terminus, the 540-residue chain is CTP synthase (540 aa).

Residues 1 to 267 are amidoligase domain; sequence MTKYIFVTGG…DQKVCDFLHL (267 aa). CTP is bound at residue serine 13. Residue serine 13 participates in UTP binding. 14-19 provides a ligand contact to ATP; that stretch reads SLGKGI. Tyrosine 54 serves as a coordination point for L-glutamine. Aspartate 71 lines the ATP pocket. 2 residues coordinate Mg(2+): aspartate 71 and glutamate 141. Residues 148 to 150, 188 to 193, and lysine 224 each bind CTP; these read DIE and KTKPTQ. UTP-binding positions include 188-193 and lysine 224; that span reads KTKPTQ. Positions 294 to 537 constitute a Glutamine amidotransferase type-1 domain; sequence TITLVGKYVE…IGAASGLPAQ (244 aa). Glycine 356 is a binding site for L-glutamine. The Nucleophile; for glutamine hydrolysis role is filled by cysteine 383. L-glutamine is bound by residues 384–387, glutamate 407, and arginine 465; that span reads LGMQ. Catalysis depends on residues histidine 510 and glutamate 512.

This sequence belongs to the CTP synthase family. In terms of assembly, homotetramer.

It catalyses the reaction UTP + L-glutamine + ATP + H2O = CTP + L-glutamate + ADP + phosphate + 2 H(+). The enzyme catalyses L-glutamine + H2O = L-glutamate + NH4(+). It carries out the reaction UTP + NH4(+) + ATP = CTP + ADP + phosphate + 2 H(+). It participates in pyrimidine metabolism; CTP biosynthesis via de novo pathway; CTP from UDP: step 2/2. Allosterically activated by GTP, when glutamine is the substrate; GTP has no effect on the reaction when ammonia is the substrate. The allosteric effector GTP functions by stabilizing the protein conformation that binds the tetrahedral intermediate(s) formed during glutamine hydrolysis. Inhibited by the product CTP, via allosteric rather than competitive inhibition. Its function is as follows. Catalyzes the ATP-dependent amination of UTP to CTP with either L-glutamine or ammonia as the source of nitrogen. Regulates intracellular CTP levels through interactions with the four ribonucleotide triphosphates. The protein is CTP synthase of Lactobacillus johnsonii (strain CNCM I-12250 / La1 / NCC 533).